The sequence spans 502 residues: ATP synthase subunit alpha (502 aa).

The interval 115-135 is disordered; the sequence is VDGLGPINTTNTRPIESPAPG. 169–176 contributes to the ATP binding site; sequence GDRQTGKT.

The protein belongs to the ATPase alpha/beta chains family. F-type ATPases have 2 components, CF(1) - the catalytic core - and CF(0) - the membrane proton channel. CF(1) has five subunits: alpha(3), beta(3), gamma(1), delta(1), epsilon(1). CF(0) has three main subunits: a(1), b(2) and c(9-12). The alpha and beta chains form an alternating ring which encloses part of the gamma chain. CF(1) is attached to CF(0) by a central stalk formed by the gamma and epsilon chains, while a peripheral stalk is formed by the delta and b chains.

The protein localises to the cell membrane. It catalyses the reaction ATP + H2O + 4 H(+)(in) = ADP + phosphate + 5 H(+)(out). In terms of biological role, produces ATP from ADP in the presence of a proton gradient across the membrane. The alpha chain is a regulatory subunit. In Bacillus anthracis (strain A0248), this protein is ATP synthase subunit alpha.